The sequence spans 313 residues: Ribosomal RNA small subunit methyltransferase H (313 aa).

S-adenosyl-L-methionine contacts are provided by residues 37–39 (GGH), D57, F83, D104, and Q111.

It belongs to the methyltransferase superfamily. RsmH family.

The protein resides in the cytoplasm. The enzyme catalyses cytidine(1402) in 16S rRNA + S-adenosyl-L-methionine = N(4)-methylcytidine(1402) in 16S rRNA + S-adenosyl-L-homocysteine + H(+). Its function is as follows. Specifically methylates the N4 position of cytidine in position 1402 (C1402) of 16S rRNA. The chain is Ribosomal RNA small subunit methyltransferase H from Mycoplasmoides gallisepticum (strain R(low / passage 15 / clone 2)) (Mycoplasma gallisepticum).